A 140-amino-acid polypeptide reads, in one-letter code: Small ribosomal subunit protein uS9 (140 aa).

The protein belongs to the universal ribosomal protein uS9 family.

The protein is Small ribosomal subunit protein uS9 of Desulfurococcus amylolyticus (strain DSM 18924 / JCM 16383 / VKM B-2413 / 1221n) (Desulfurococcus kamchatkensis).